A 415-amino-acid chain; its full sequence is Imidazolonepropionase (415 aa).

The Fe(3+) site is built by His74 and His76. The Zn(2+) site is built by His74 and His76. Residues Arg83, Tyr146, and His179 each coordinate 4-imidazolone-5-propanoate. Residue Tyr146 participates in N-formimidoyl-L-glutamate binding. Fe(3+) is bound at residue His244. His244 is a Zn(2+) binding site. Residue Gln247 coordinates 4-imidazolone-5-propanoate. Position 319 (Asp319) interacts with Fe(3+). Residue Asp319 participates in Zn(2+) binding. Asn321 and Gly323 together coordinate N-formimidoyl-L-glutamate. Residue Thr324 coordinates 4-imidazolone-5-propanoate.

Belongs to the metallo-dependent hydrolases superfamily. HutI family. Zn(2+) serves as cofactor. Requires Fe(3+) as cofactor.

Its subcellular location is the cytoplasm. The enzyme catalyses 4-imidazolone-5-propanoate + H2O = N-formimidoyl-L-glutamate. The protein operates within amino-acid degradation; L-histidine degradation into L-glutamate; N-formimidoyl-L-glutamate from L-histidine: step 3/3. Catalyzes the hydrolytic cleavage of the carbon-nitrogen bond in imidazolone-5-propanoate to yield N-formimidoyl-L-glutamate. It is the third step in the universal histidine degradation pathway. This chain is Imidazolonepropionase, found in Cupriavidus metallidurans (strain ATCC 43123 / DSM 2839 / NBRC 102507 / CH34) (Ralstonia metallidurans).